The primary structure comprises 181 residues: DNA-packaging protein NU1 homolog (181 aa).

It to phage lambda DNA packaging protein NU1.

The polypeptide is DNA-packaging protein NU1 homolog (nohD) (Escherichia coli (strain K12)).